Here is a 372-residue protein sequence, read N- to C-terminus: Probable leucine aminopeptidase MCYG_08380 (372 aa).

An N-terminal signal peptide occupies residues 1 to 19 (MKVSVLAAVAAFAAATAIA). A glycan (N-linked (GlcNAc...) asparagine) is linked at N96. Zn(2+)-binding residues include H175 and D194. N-linked (GlcNAc...) asparagine glycosylation is found at N195 and N219. E233 and D260 together coordinate Zn(2+). The cysteines at positions 305 and 309 are disulfide-linked. H338 is a binding site for Zn(2+).

It belongs to the peptidase M28 family. M28E subfamily. Monomer. Requires Zn(2+) as cofactor.

The protein resides in the secreted. In terms of biological role, probable extracellular aminopeptidase which contributes to pathogenicity. The sequence is that of Probable leucine aminopeptidase MCYG_08380 from Arthroderma otae (strain ATCC MYA-4605 / CBS 113480) (Microsporum canis).